A 365-amino-acid chain; its full sequence is 1-aminocyclopropane-1-carboxylate oxidase homolog 1 (365 aa).

One can recognise a Fe2OG dioxygenase domain in the interval Cys-212–Ser-313. Fe cation is bound by residues His-238, Asp-240, and His-294.

This sequence belongs to the iron/ascorbate-dependent oxidoreductase family. Fe cation is required as a cofactor.

This is 1-aminocyclopropane-1-carboxylate oxidase homolog 1 from Arabidopsis thaliana (Mouse-ear cress).